The sequence spans 243 residues: Collagen triple helix repeat-containing protein 1 (243 aa).

Positions 1 to 30 (MRPQGPAASPQRLRGLLLLLLLQLPAPSSA) are cleaved as a signal peptide. Positions 57–90 (QGPAGVPGRDGSPGANGIPGTPGIPGRDGFKGEK) constitute a Collagen-like domain. Residues 62–85 (VPGRDGSPGANGIPGTPGIPGRDG) form a disordered region. Asn186 is a glycosylation site (N-linked (GlcNAc...) asparagine).

N-glycosylated. Isoform 1 is expressed in calcified atherosclerotic plaque and chondrocyte-like cells.

It localises to the secreted. The protein resides in the extracellular space. Its subcellular location is the extracellular matrix. May act as a negative regulator of collagen matrix deposition. This is Collagen triple helix repeat-containing protein 1 (CTHRC1) from Homo sapiens (Human).